Here is a 243-residue protein sequence, read N- to C-terminus: Small ribosomal subunit protein uS3 (243 aa).

Residues 39–110 (IRVFIQKKYG…QVRINVVEIE (72 aa)) enclose the KH type-2 domain. The tract at residues 216 to 243 (QPLPVGASPRRKGNRRPQQFEDRSNDGK) is disordered. A compositionally biased stretch (basic and acidic residues) spans 233–243 (QQFEDRSNDGK).

The protein belongs to the universal ribosomal protein uS3 family. In terms of assembly, part of the 30S ribosomal subunit. Forms a tight complex with proteins S10 and S14.

Functionally, binds the lower part of the 30S subunit head. Binds mRNA in the 70S ribosome, positioning it for translation. The sequence is that of Small ribosomal subunit protein uS3 from Prochlorococcus marinus (strain SARG / CCMP1375 / SS120).